The sequence spans 321 residues: Putative ankyrin repeat domain-containing protein 26-like protein (321 aa).

ANK repeat units follow at residues 48–78, 82–111, 115–144, 148–177, and 181–210; these read KHLGKLHRAASRGEVSKVECILSSGSADLDE, KKRTALHLACANGHPEVVALLVDRGCQLDV, KNRTALLKAVQCQEEECATILLEHGADPDL, YGNTTLHYAIYNEDIPMTKKLLLHHANIES, and DELTPFLLAVHEQKQQMEDFLRKQKENLTA. Disordered regions lie at residues 222–242 and 268–321; these read EYKENETPRNPQNSNPEGTSN and FNKP…NENI. A compositionally biased stretch (polar residues) spans 229–242; that stretch reads PRNPQNSNPEGTSN.

The sequence is that of Putative ankyrin repeat domain-containing protein 26-like protein (ANKRD26P1) from Homo sapiens (Human).